Reading from the N-terminus, the 218-residue chain is Uracil-DNA glycosylase (218 aa).

Catalysis depends on Asp60, which acts as the Proton acceptor.

Belongs to the uracil-DNA glycosylase (UDG) superfamily. UNG family.

It is found in the cytoplasm. The catalysed reaction is Hydrolyzes single-stranded DNA or mismatched double-stranded DNA and polynucleotides, releasing free uracil.. Functionally, excises uracil residues from the DNA which can arise as a result of misincorporation of dUMP residues by DNA polymerase or due to deamination of cytosine. This is Uracil-DNA glycosylase from Shewanella oneidensis (strain ATCC 700550 / JCM 31522 / CIP 106686 / LMG 19005 / NCIMB 14063 / MR-1).